The sequence spans 494 residues: 4-trimethylaminobutyraldehyde dehydrogenase (494 aa).

Ser-2 carries the post-translational modification N-acetylserine. Lys-30 carries the N6-acetyllysine; alternate modification. Lys-30 is subject to N6-succinyllysine; alternate. N6-succinyllysine is present on Lys-59. Residues Lys-180 and 232-236 (GSVPT) each bind NAD(+). Residue Glu-254 is the Proton acceptor of the active site. Cys-288 functions as the Nucleophile in the catalytic mechanism. Position 298 is an N6-acetyllysine (Lys-298). The residue at position 303 (Lys-303) is an N6-acetyllysine; alternate. Lys-303 carries the post-translational modification N6-succinyllysine; alternate. Lys-344 is modified (N6-acetyllysine). Residue Glu-391 coordinates NAD(+).

The protein belongs to the aldehyde dehydrogenase family. As to quaternary structure, homotetramer.

The protein localises to the cytoplasm. It is found in the cytosol. It catalyses the reaction 4-(trimethylamino)butanal + NAD(+) + H2O = 4-(trimethylamino)butanoate + NADH + 2 H(+). It carries out the reaction an aldehyde + NAD(+) + H2O = a carboxylate + NADH + 2 H(+). The enzyme catalyses 4-aminobutanal + NAD(+) + H2O = 4-aminobutanoate + NADH + 2 H(+). The catalysed reaction is formaldehyde + NAD(+) + H2O = formate + NADH + 2 H(+). It catalyses the reaction acetaldehyde + NAD(+) + H2O = acetate + NADH + 2 H(+). It carries out the reaction imidazole-4-acetaldehyde + NAD(+) + H2O = imidazole-4-acetate + NADH + 2 H(+). The enzyme catalyses acrolein + NAD(+) + H2O = acrylate + NADH + 2 H(+). The catalysed reaction is (5-hydroxyindol-3-yl)acetaldehyde + NAD(+) + H2O = (5-hydroxyindol-3-yl)acetate + NADH + 2 H(+). It catalyses the reaction 3,4-dihydroxyphenylacetaldehyde + NAD(+) + H2O = 3,4-dihydroxyphenylacetate + NADH + 2 H(+). It carries out the reaction spermine monoaldehyde + NAD(+) + H2O = N-(2-carboxyethyl)spermidine + NADH + 2 H(+). The enzyme catalyses propanal + NAD(+) + H2O = propanoate + NADH + 2 H(+). The catalysed reaction is butanal + NAD(+) + H2O = butanoate + NADH + 2 H(+). It catalyses the reaction pentanal + NAD(+) + H2O = pentanoate + NADH + 2 H(+). It carries out the reaction hexanal + NAD(+) + H2O = hexanoate + NADH + 2 H(+). Its pathway is amine and polyamine biosynthesis; carnitine biosynthesis. Converts gamma-trimethylaminobutyraldehyde into gamma-butyrobetaine with high efficiency (in vitro). Can catalyze the irreversible oxidation of a broad range of aldehydes to the corresponding acids in an NAD-dependent reaction, but with low efficiency. Catalyzes the oxidation of aldehydes arising from biogenic amines and polyamines. In Pongo abelii (Sumatran orangutan), this protein is 4-trimethylaminobutyraldehyde dehydrogenase (ALDH9A1).